The following is a 601-amino-acid chain: Glutathione-regulated potassium-efflux system protein KefB (601 aa).

Transmembrane regions (helical) follow at residues 4-24 (ADLL…VPLA), 29-49 (IGAV…GLGF), 55-75 (EILH…GLEL), 87-107 (IFGV…GLLM), 111-131 (FLWQ…TAMA), 152-172 (VLLF…LLAG), 177-197 (HFDW…LIGG), 207-227 (FIAA…LVLS), 230-250 (LFMD…GVLL), 262-282 (AIDP…GMSL), 284-304 (LGVL…LVVI), 324-344 (MQFA…FSTA), and 356-376 (ALLL…MKGI). Residues 400 to 519 (KPQVIVVGFG…AGVTQFSRET (120 aa)) form the RCK N-terminal domain.

It belongs to the monovalent cation:proton antiporter 2 (CPA2) transporter (TC 2.A.37) family. KefB subfamily. As to quaternary structure, interacts with the regulatory subunit KefG.

Its subcellular location is the cell inner membrane. In terms of biological role, pore-forming subunit of a potassium efflux system that confers protection against electrophiles. Catalyzes K(+)/H(+) antiport. This Salmonella paratyphi A (strain ATCC 9150 / SARB42) protein is Glutathione-regulated potassium-efflux system protein KefB.